A 25-amino-acid polypeptide reads, in one-letter code: uncharacterized protein (25 aa).

This is an uncharacterized protein from Ornithodoros (relapsing fever ticks).